Reading from the N-terminus, the 274-residue chain is Momilactone A synthase (274 aa).

The protein belongs to the short-chain dehydrogenases/reductases (SDR) family.

The catalysed reaction is 3beta-hydroxy-9beta-pimara-7,15-dien-19,6beta-olide + NAD(+) = momilactone A + NADH + H(+). The enzyme catalyses 3beta-hydroxy-9beta-pimara-7,15-dien-19,6beta-olide + NADP(+) = momilactone A + NADPH + H(+). In terms of biological role, involved in momilactone phytoalexins biosynthesis. Catalyzes the last step of momilactone A biosynthesis. The protein is Momilactone A synthase of Oryza sativa subsp. japonica (Rice).